Consider the following 335-residue polypeptide: COP9 signalosome complex subunit 5 (335 aa).

In terms of domain architecture, MPN spans 51–187 (VRISAVALLK…IGAFRTFPKD (137 aa)). Residues His134, His136, and Asp147 each contribute to the Zn(2+) site. The JAMM motif motif lies at 134–147 (HSHPGYGCWLSGID).

It belongs to the peptidase M67A family. CSN5 subfamily. Component of the COP9 signalosome (CSN) complex.

Its subcellular location is the cytoplasm. The protein resides in the nucleus. In terms of biological role, catalytic component of the COP9 signalosome (CSN) complex that acts as an regulator of the ubiquitin (Ubl) conjugation pathway by mediating the deneddylation of the cullin subunit of SCF-type E3 ubiquitin-protein ligase complexes. The CSN complex seems to link protein degradation to sexual development. Required for fruit body formation. This chain is COP9 signalosome complex subunit 5 (rri1), found in Emericella nidulans (strain FGSC A4 / ATCC 38163 / CBS 112.46 / NRRL 194 / M139) (Aspergillus nidulans).